Here is a 271-residue protein sequence, read N- to C-terminus: Cobalt import ATP-binding protein CbiO (271 aa).

Residues 2-236 enclose the ABC transporter domain; sequence LATSDLWFRY…TEAMEHAGLT (235 aa). 34-41 provides a ligand contact to ATP; that stretch reads GANGCGKS.

This sequence belongs to the ABC transporter superfamily. Cobalt importer (TC 3.A.1.18.1) family. As to quaternary structure, forms an energy-coupling factor (ECF) transporter complex composed of an ATP-binding protein (A component, CbiO), a transmembrane protein (T component, CbiQ) and 2 possible substrate-capture proteins (S components, CbiM and CbiN) of unknown stoichimetry.

The protein localises to the cell inner membrane. The protein operates within cofactor biosynthesis; adenosylcobalamin biosynthesis. In terms of biological role, part of the energy-coupling factor (ECF) transporter complex CbiMNOQ involved in cobalt import. Presumably responsible for energy coupling to the transport system. The sequence is that of Cobalt import ATP-binding protein CbiO from Salmonella typhi.